An 842-amino-acid polypeptide reads, in one-letter code: Translation initiation factor IF-2 (842 aa).

2 disordered regions span residues glutamate 42–serine 91 and leucine 139–proline 253. Basic and acidic residues-rich tracts occupy residues isoleucine 176–histidine 190 and serine 199–arginine 214. Residues proline 340 to lysine 509 form the tr-type G domain. Residues glycine 349–threonine 356 form a G1 region. Glycine 349–threonine 356 lines the GTP pocket. A G2 region spans residues glycine 374–histidine 378. Residues aspartate 395–glycine 398 form a G3 region. GTP contacts are provided by residues aspartate 395–histidine 399 and asparagine 449–aspartate 452. The G4 stretch occupies residues asparagine 449 to aspartate 452. The segment at serine 485–lysine 487 is G5.

It belongs to the TRAFAC class translation factor GTPase superfamily. Classic translation factor GTPase family. IF-2 subfamily.

Its subcellular location is the cytoplasm. Its function is as follows. One of the essential components for the initiation of protein synthesis. Protects formylmethionyl-tRNA from spontaneous hydrolysis and promotes its binding to the 30S ribosomal subunits. Also involved in the hydrolysis of GTP during the formation of the 70S ribosomal complex. The sequence is that of Translation initiation factor IF-2 from Bartonella tribocorum (strain CIP 105476 / IBS 506).